Reading from the N-terminus, the 61-residue chain is Small ribosomal subunit protein uS14 (61 aa).

Zn(2+) is bound by residues Cys-24, Cys-27, Cys-40, and Cys-43.

The protein belongs to the universal ribosomal protein uS14 family. Zinc-binding uS14 subfamily. Part of the 30S ribosomal subunit. Contacts proteins S3 and S10. Requires Zn(2+) as cofactor.

Its function is as follows. Binds 16S rRNA, required for the assembly of 30S particles and may also be responsible for determining the conformation of the 16S rRNA at the A site. In Dehalococcoides mccartyi (strain ATCC BAA-2266 / KCTC 15142 / 195) (Dehalococcoides ethenogenes (strain 195)), this protein is Small ribosomal subunit protein uS14.